The sequence spans 194 residues: Cyclin-dependent kinase inhibitor 4 (194 aa).

Over residues 49–58 (LELRSRRLEK) the composition is skewed to basic and acidic residues. Disordered regions lie at residues 49-70 (LELR…PRRR) and 107-139 (TRET…SHCK).

The protein belongs to the CDI family. ICK/KRP subfamily.

This is Cyclin-dependent kinase inhibitor 4 (KRP4) from Oryza sativa subsp. japonica (Rice).